The following is a 51-amino-acid chain: Lipid-anchored plasma membrane protein CPP3 (51 aa).

Residues 1-28 (MRHHQNMHYAPQQQPVYVQQPPPRRESG) are disordered.

The protein belongs to the CYSTM1 family. In terms of processing, palmitoylated near the C-terminus.

The protein resides in the cell membrane. This is Lipid-anchored plasma membrane protein CPP3 from Saccharomyces cerevisiae (strain ATCC 204508 / S288c) (Baker's yeast).